Reading from the N-terminus, the 313-residue chain is MITFPHRHLLGIKGLTEQDITLLLDRADEAVKISRQREKKTSSLRGLTQINLFFEASTRTQSSFELAGKRLGADVMNMSVGNSSVKKGETLIDTAMTLNAMHPDVLVVRHSSAGAASLLAQKVSCSVVNAGDGQHEHPTQALLDALTIRRAKGKLSRIIVAICGDVLHSRVARSNILLLNQMGARVRVVAPATLLPAGIAEMGAEVYHSMAEGLKDADVVMMLRLQRERMAGSFVPSVREYFHYYGLDAEKLKVAKDDALVMHPGPMNRGVEIASEIADGPQSVIEQQVEMGVAVRMAVMETLLLSQNQGPRL.

The carbamoyl phosphate site is built by arginine 59 and threonine 60. Residue lysine 87 participates in L-aspartate binding. Residues arginine 109, histidine 137, and glutamine 140 each coordinate carbamoyl phosphate. L-aspartate-binding residues include arginine 170 and arginine 224. Residues glycine 265 and proline 266 each coordinate carbamoyl phosphate.

Belongs to the aspartate/ornithine carbamoyltransferase superfamily. ATCase family. As to quaternary structure, heterododecamer (2C3:3R2) of six catalytic PyrB chains organized as two trimers (C3), and six regulatory PyrI chains organized as three dimers (R2).

It catalyses the reaction carbamoyl phosphate + L-aspartate = N-carbamoyl-L-aspartate + phosphate + H(+). It functions in the pathway pyrimidine metabolism; UMP biosynthesis via de novo pathway; (S)-dihydroorotate from bicarbonate: step 2/3. In terms of biological role, catalyzes the condensation of carbamoyl phosphate and aspartate to form carbamoyl aspartate and inorganic phosphate, the committed step in the de novo pyrimidine nucleotide biosynthesis pathway. The protein is Aspartate carbamoyltransferase catalytic subunit of Rhizobium meliloti (strain 1021) (Ensifer meliloti).